Here is a 208-residue protein sequence, read N- to C-terminus: Redox-sensing transcriptional repressor Rex (208 aa).

Residues 15 to 54 constitute a DNA-binding region (H-T-H motif); that stretch reads SYYMCLERLLDEGVEVVSSEELARRLDLKASQIRKDLSYF. 89 to 94 serves as a coordination point for NAD(+); that stretch reads GAGNIG.

It belongs to the transcriptional regulatory Rex family. In terms of assembly, homodimer.

The protein resides in the cytoplasm. Its function is as follows. Modulates transcription in response to changes in cellular NADH/NAD(+) redox state. This Thermotoga petrophila (strain ATCC BAA-488 / DSM 13995 / JCM 10881 / RKU-1) protein is Redox-sensing transcriptional repressor Rex.